A 364-amino-acid chain; its full sequence is Mannitol-1-phosphate 5-dehydrogenase (364 aa).

An NAD(+)-binding site is contributed by 6–17 (VLHFGAGNIGRG).

Belongs to the mannitol dehydrogenase family.

It carries out the reaction D-mannitol 1-phosphate + NAD(+) = beta-D-fructose 6-phosphate + NADH + H(+). This is Mannitol-1-phosphate 5-dehydrogenase (mtlD) from Mycoplasma pneumoniae (strain ATCC 29342 / M129 / Subtype 1) (Mycoplasmoides pneumoniae).